A 145-amino-acid polypeptide reads, in one-letter code: Neuropeptide-like protein 68 (145 aa).

Residues 1 to 15 form the signal peptide; it reads MLLVLLFSLFSVGFG. The tract at residues 41 to 65 is disordered; it reads SSSSEDDTPDFPSLRDKRGVDPMSI.

Its subcellular location is the secreted. This Caenorhabditis elegans protein is Neuropeptide-like protein 68.